We begin with the raw amino-acid sequence, 541 residues long: Chaperonin GroEL 2 (541 aa).

ATP-binding positions include 29–32, 86–90, glycine 413, 478–480, and aspartate 494; these read TLGP, DGTTT, and NAA.

The protein belongs to the chaperonin (HSP60) family. As to quaternary structure, forms a cylinder of 14 subunits composed of two heptameric rings stacked back-to-back. Interacts with the co-chaperonin GroES.

Its subcellular location is the cytoplasm. It carries out the reaction ATP + H2O + a folded polypeptide = ADP + phosphate + an unfolded polypeptide.. Functionally, together with its co-chaperonin GroES, plays an essential role in assisting protein folding. The GroEL-GroES system forms a nano-cage that allows encapsulation of the non-native substrate proteins and provides a physical environment optimized to promote and accelerate protein folding. This is Chaperonin GroEL 2 from Corynebacterium jeikeium (strain K411).